Consider the following 297-residue polypeptide: tRNA pseudouridine synthase A (297 aa).

The active-site Nucleophile is the Asp72. Tyr144 is a binding site for substrate.

The protein belongs to the tRNA pseudouridine synthase TruA family. Homodimer.

The catalysed reaction is uridine(38/39/40) in tRNA = pseudouridine(38/39/40) in tRNA. Formation of pseudouridine at positions 38, 39 and 40 in the anticodon stem and loop of transfer RNAs. The polypeptide is tRNA pseudouridine synthase A (Mycobacterium bovis (strain ATCC BAA-935 / AF2122/97)).